The chain runs to 257 residues: Transmembrane protein 101 (257 aa).

8 consecutive transmembrane segments (helical) span residues valine 21–glutamate 40, valine 52–glycine 72, tryptophan 77–glycine 97, tyrosine 110–leucine 130, serine 139–leucine 159, leucine 182–leucine 202, isoleucine 206–histidine 226, and phenylalanine 233–leucine 253.

The protein localises to the membrane. Functionally, may activate NF-kappa-B signaling pathways. The chain is Transmembrane protein 101 (TMEM101) from Pongo abelii (Sumatran orangutan).